We begin with the raw amino-acid sequence, 98 residues long: uncharacterized protein (98 aa).

The protein belongs to the HHV-5 UL19 protein family.

This is an uncharacterized protein from Human cytomegalovirus (strain AD169) (HHV-5).